Here is a 232-residue protein sequence, read N- to C-terminus: Ribonuclease HII (232 aa).

Residues 26-218 form the RNase H type-2 domain; sequence RILCGVDEAG…VRRALEGMSA (193 aa). A divalent metal cation is bound by residues Asp-32, Glu-33, and Asp-127.

The protein belongs to the RNase HII family. It depends on Mn(2+) as a cofactor. Mg(2+) is required as a cofactor.

The protein resides in the cytoplasm. It catalyses the reaction Endonucleolytic cleavage to 5'-phosphomonoester.. In terms of biological role, endonuclease that specifically degrades the RNA of RNA-DNA hybrids. The chain is Ribonuclease HII from Ralstonia pickettii (strain 12J).